Consider the following 219-residue polypeptide: MTQDELKKAVGWAALQYVQPGTIVGVGTGSTAAHFIDALGTMKGQIEGAVSSSDASTEKLKGLGIHVFDLNEVDSLGIYVDGADEINGHMQMIKGGGAALTREKIIASVAEKFICIADASKQVDILGKFPLPVEVIPMARSAVARQLVKLGGRPEYRQNVVTDNGNVILDVYGMEILDPIALENAINAIPGVVTVGLFANRGADVALIGTPDGVKTIVK.

Substrate-binding positions include 28–31 (TGST), 81–84 (DGAD), and 94–97 (KGGG). Residue Glu103 is the Proton acceptor of the active site. Lys121 serves as a coordination point for substrate.

It belongs to the ribose 5-phosphate isomerase family. As to quaternary structure, homodimer.

It catalyses the reaction aldehydo-D-ribose 5-phosphate = D-ribulose 5-phosphate. Its pathway is carbohydrate degradation; pentose phosphate pathway; D-ribose 5-phosphate from D-ribulose 5-phosphate (non-oxidative stage): step 1/1. Catalyzes the reversible conversion of ribose-5-phosphate to ribulose 5-phosphate. The polypeptide is Ribose-5-phosphate isomerase A (Salmonella choleraesuis (strain SC-B67)).